We begin with the raw amino-acid sequence, 582 residues long: Inactive metallocarboxypeptidase ECM14 (582 aa).

Positions 1 to 20 (MHILQVITGATLVSVPFVSA) are cleaved as a signal peptide. Positions 21–172 (IPSSTSEFLP…QAVYESYPQP (152 aa)) are excised as a propeptide. The 323-residue stretch at 200–522 (DYQPLSVIIP…NAVLVFGQFL (323 aa)) folds into the Peptidase M14 domain. Positions 265 and 268 each coordinate Zn(2+). Substrate contacts are provided by residues 265-268 (HARE), Arg323, and 340-341 (DR). A disulfide bond links Cys334 and Cys357. N-linked (GlcNAc...) asparagine glycans are attached at residues Asn381 and Asn387. Position 397 (His397) interacts with Zn(2+). Position 398 to 399 (398 to 399 (SY)) interacts with substrate. Positions 561-571 (SNQLEDDDNEN) are enriched in acidic residues. The disordered stretch occupies residues 561–582 (SNQLEDDDNENDTLLGFRTQKV). The N-linked (GlcNAc...) asparagine glycan is linked to Asn571.

The protein belongs to the peptidase M14 family. The cofactor is Zn(2+).

It localises to the vacuole. Its subcellular location is the secreted. Its function is as follows. Inactive carboxypeptidase that may play a role in cell wall organization and biogenesis. The protein is Inactive metallocarboxypeptidase ECM14 (ECM14) of Coccidioides posadasii (strain RMSCC 757 / Silveira) (Valley fever fungus).